The chain runs to 473 residues: Photosystem II CP43 reaction center protein (473 aa).

The propeptide occupies 1-14 (MKTLYSLRRFYHVE). Thr15 carries the N-acetylthreonine modification. Residue Thr15 is modified to Phosphothreonine. A run of 5 helical transmembrane segments spans residues 69–93 (LFEV…PHLA), 134–155 (LLGP…KDRN), 178–200 (KALY…RKIT), 255–275 (KPFA…LSYS), and 291–312 (WFNN…ASQA). Glu367 lines the [CaMn4O5] cluster pocket. The helical transmembrane segment at 447 to 471 (RARAAAAGFEKGIDRDFEPVLSMTP) threads the bilayer.

Belongs to the PsbB/PsbC family. PsbC subfamily. PSII is composed of 1 copy each of membrane proteins PsbA, PsbB, PsbC, PsbD, PsbE, PsbF, PsbH, PsbI, PsbJ, PsbK, PsbL, PsbM, PsbT, PsbX, PsbY, PsbZ, Psb30/Ycf12, at least 3 peripheral proteins of the oxygen-evolving complex and a large number of cofactors. It forms dimeric complexes. Binds multiple chlorophylls and provides some of the ligands for the Ca-4Mn-5O cluster of the oxygen-evolving complex. It may also provide a ligand for a Cl- that is required for oxygen evolution. PSII binds additional chlorophylls, carotenoids and specific lipids. serves as cofactor.

It is found in the plastid. Its subcellular location is the chloroplast thylakoid membrane. One of the components of the core complex of photosystem II (PSII). It binds chlorophyll and helps catalyze the primary light-induced photochemical processes of PSII. PSII is a light-driven water:plastoquinone oxidoreductase, using light energy to abstract electrons from H(2)O, generating O(2) and a proton gradient subsequently used for ATP formation. The sequence is that of Photosystem II CP43 reaction center protein from Capsella bursa-pastoris (Shepherd's purse).